Here is a 1225-residue protein sequence, read N- to C-terminus: uncharacterized protein (1225 aa).

Residues 1–27 (MKRFLHRVKWPLLLSSIAVSLGIVAVA) form the signal peptide. The N-palmitoyl cysteine moiety is linked to residue Cys28. Residue Cys28 is the site of S-diacylglycerol cysteine attachment. Positions 995 to 1014 (QSEKSSSNGGQAQLQSTQSS) are disordered.

This sequence belongs to the MG307/MG309/MG338 family.

The protein localises to the cell membrane. This is an uncharacterized protein from Mycoplasma genitalium (strain ATCC 33530 / DSM 19775 / NCTC 10195 / G37) (Mycoplasmoides genitalium).